The primary structure comprises 200 residues: Serotonin N-acetyltransferase 2, chloroplastic (200 aa).

The N-terminal 41 residues, 1–41 (MQMQAARPRVGVRPRGGIRPFPLPTLSFNNNSNRSACACAC), are a transit peptide targeting the chloroplast. One can recognise an N-acetyltransferase domain in the interval 55-195 (FAVRRSSTGL…MAFYRSRQQI (141 aa)).

It is found in the cytoplasm. The protein localises to the plastid. Its subcellular location is the chloroplast. It carries out the reaction serotonin + acetyl-CoA = N-acetylserotonin + CoA + H(+). The catalysed reaction is tyramine + acetyl-CoA = N-acetyltyramine + CoA + H(+). The enzyme catalyses tryptamine + acetyl-CoA = N-acetyltryptamine + CoA + H(+). It catalyses the reaction 5-methoxytryptamine + acetyl-CoA = melatonin + CoA + H(+). It participates in aromatic compound metabolism; melatonin biosynthesis; melatonin from serotonin: step 1/2. Catalyzes the N-acetylation of serotonin into N-acetylserotonin, the penultimate step in the synthesis of melatonin. Catalyzes in vitro the N-acetylation of tryptamine to produce N-acetyltryptamine, 5-methoxytryptamine to produce melatonin and tyramine to produce N-acetyltyramine. This Oryza sativa subsp. japonica (Rice) protein is Serotonin N-acetyltransferase 2, chloroplastic.